We begin with the raw amino-acid sequence, 291 residues long: UDP-N-acetylenolpyruvoylglucosamine reductase (291 aa).

In terms of domain architecture, FAD-binding PCMH-type spans 22-187 (RIGGPARYFK…ASATFQLTKD (166 aa)). Residue Arg-166 is part of the active site. The Proton donor role is filled by Cys-214. Glu-283 is an active-site residue.

Belongs to the MurB family. The cofactor is FAD.

It is found in the cytoplasm. It carries out the reaction UDP-N-acetyl-alpha-D-muramate + NADP(+) = UDP-N-acetyl-3-O-(1-carboxyvinyl)-alpha-D-glucosamine + NADPH + H(+). Its pathway is cell wall biogenesis; peptidoglycan biosynthesis. Its function is as follows. Cell wall formation. The protein is UDP-N-acetylenolpyruvoylglucosamine reductase of Chlamydia trachomatis serovar L2 (strain ATCC VR-902B / DSM 19102 / 434/Bu).